Reading from the N-terminus, the 178-residue chain is ATP synthase subunit delta (178 aa).

The protein belongs to the ATPase delta chain family. F-type ATPases have 2 components, F(1) - the catalytic core - and F(0) - the membrane proton channel. F(1) has five subunits: alpha(3), beta(3), gamma(1), delta(1), epsilon(1). F(0) has three main subunits: a(1), b(2) and c(10-14). The alpha and beta chains form an alternating ring which encloses part of the gamma chain. F(1) is attached to F(0) by a central stalk formed by the gamma and epsilon chains, while a peripheral stalk is formed by the delta and b chains.

It is found in the cell membrane. F(1)F(0) ATP synthase produces ATP from ADP in the presence of a proton or sodium gradient. F-type ATPases consist of two structural domains, F(1) containing the extramembraneous catalytic core and F(0) containing the membrane proton channel, linked together by a central stalk and a peripheral stalk. During catalysis, ATP synthesis in the catalytic domain of F(1) is coupled via a rotary mechanism of the central stalk subunits to proton translocation. In terms of biological role, this protein is part of the stalk that links CF(0) to CF(1). It either transmits conformational changes from CF(0) to CF(1) or is implicated in proton conduction. This Streptococcus pyogenes serotype M3 (strain ATCC BAA-595 / MGAS315) protein is ATP synthase subunit delta.